The sequence spans 390 residues: Protein phosphatase methylesterase 1 (390 aa).

Residues 19 to 50 (FGLSSLSEDPDESESNSNYFSPTPQPPNELRT) are disordered. Residues 100–332 (PIFICHHGAG…NLIIGQMQGK (233 aa)) form the AB hydrolase-1 domain. Residues S186, D213, and H346 contribute to the active site.

Belongs to the AB hydrolase superfamily.

It carries out the reaction [phosphatase 2A protein]-C-terminal L-leucine methyl ester + H2O = [phosphatase 2A protein]-C-terminal L-leucine + methanol + H(+). Its function is as follows. Demethylates proteins that have been reversibly carboxymethylated. Demethylates the phosphatase PP2A catalytic subunit. The protein is Protein phosphatase methylesterase 1 (PPE1) of Debaryomyces hansenii (strain ATCC 36239 / CBS 767 / BCRC 21394 / JCM 1990 / NBRC 0083 / IGC 2968) (Yeast).